Here is a 366-residue protein sequence, read N- to C-terminus: Quinolinate synthase (366 aa).

Residues His44 and Ser61 each coordinate iminosuccinate. Cys108 serves as a coordination point for [4Fe-4S] cluster. Iminosuccinate is bound by residues 139–141 and Ser160; that span reads YIN. Cys228 lines the [4Fe-4S] cluster pocket. Iminosuccinate is bound by residues 254–256 and Thr271; that span reads HPE. Cys318 contacts [4Fe-4S] cluster.

Belongs to the quinolinate synthase family. Type 3 subfamily. It depends on [4Fe-4S] cluster as a cofactor.

The protein resides in the cytoplasm. It catalyses the reaction iminosuccinate + dihydroxyacetone phosphate = quinolinate + phosphate + 2 H2O + H(+). Its pathway is cofactor biosynthesis; NAD(+) biosynthesis; quinolinate from iminoaspartate: step 1/1. Catalyzes the condensation of iminoaspartate with dihydroxyacetone phosphate to form quinolinate. This Listeria innocua serovar 6a (strain ATCC BAA-680 / CLIP 11262) protein is Quinolinate synthase.